Reading from the N-terminus, the 528-residue chain is Protein DA1-related 2 (528 aa).

A disordered region spans residues 60 to 108 (SNGGGSGAHTNHHPPQFQEDENMVFPLPPSSLDDRSRGARDKEELDRSI). The segment covering 91–106 (LDDRSRGARDKEELDR) has biased composition (basic and acidic residues). The UIM 1 domain occupies 99 to 118 (RDKEELDRSISLSLADNTKR). In terms of domain architecture, UIM 2; degenerate spans 127 to 148 (DNNRDFPRPFHGGLNPSSFIPP). The LIM zinc-binding domain occupies 160–220 (RICGGCNSDI…KLCFKELTHP (61 aa)). The segment at 447–474 (DPSTRNLPSTSSVATSSSSSFSNKKGGK) is disordered. The span at 455 to 470 (STSSVATSSSSSFSNK) shows a compositional bias: low complexity.

In terms of assembly, interacts with ubiquitin, TCP14 and TCP15. Polyubiquitinated by DA2. Expressed in the vasculature of leaves, inflorescence stems, flowers, hypocotyls, and primary and lateral roots. In roots, expressed in phloem companion cells.

Its function is as follows. Acts redundantly with DA1 and DAR1 to regulate endoreduplication during leaf development. Together with DA1 and DAR1, modulates the protein stability of the transcription factors TCP14 and TCP15, which repress endoreduplication by directly regulating the expression of cell-cycle genes. Involved in root phloem development. Is an essential component of early phloem development, long-distance delivery of phloem content, and proper maintenance of root system architecture. Involved in the control of root meristem size. Functions genetically downstream of cytokinin and IAA3 to maintain normal auxin distribution by influencing polar auxin transport. Acts through the PLETHORA pathway, upstream of PLT1 and PLT2 to influence root stem cell niche activity and thus control root meristem size. This Arabidopsis thaliana (Mouse-ear cress) protein is Protein DA1-related 2.